Here is a 219-residue protein sequence, read N- to C-terminus: Ras-related protein Rab-3B (219 aa).

At A2 the chain carries N-acetylalanine. Residues S31, S32, V33, G34, K35, T36, S37, P49, and S53 each coordinate GTP. T36 provides a ligand contact to Mg(2+). The Switch 1 motif lies at 45–58 (DTFTPAFVSTVGID). Mg(2+) is bound by residues T54 and D77. Positions 78-96 (TAGQERYRTITTAYYRGAM) match the Switch 2 motif. Residue G80 coordinates GTP. At T86 the chain carries Phosphothreonine. GTP contacts are provided by N135, K136, D138, A166, and K167. Phosphoserine occurs at positions 188 and 190. Residues C217 and C219 are each lipidated (S-geranylgeranyl cysteine). At C219 the chain carries Cysteine methyl ester.

Belongs to the small GTPase superfamily. Rab family. In terms of assembly, interacts with RIMS1, RIMS2, RPH3A and RPH3AL. The GTP-bound form interacts with GAS8/DRC4 (via coiled-coil domains). Interacts with GDI2, CHM and CHML; phosphorylation at Thr-86 disrupts these interactions. Interacts with MADD (via uDENN domain); the GTP-bound form is preferred for interaction. It depends on Mg(2+) as a cofactor. In terms of processing, phosphorylation of Thr-86 in the switch II region by LRRK2 prevents the association of RAB regulatory proteins, including CHM, CHML and RAB GDP dissociation inhibitor GDI2.

It is found in the cell membrane. It localises to the golgi apparatus. It carries out the reaction GTP + H2O = GDP + phosphate + H(+). With respect to regulation, regulated by guanine nucleotide exchange factors (GEFs) which promote the exchange of bound GDP for free GTP. Regulated by GTPase activating proteins (GAPs) which increase the GTP hydrolysis activity. Inhibited by GDP dissociation inhibitors (GDIs) which prevent Rab-GDP dissociation. Its function is as follows. The small GTPases Rab are key regulators of intracellular membrane trafficking, from the formation of transport vesicles to their fusion with membranes. Rabs cycle between an inactive GDP-bound form and an active GTP-bound form that is able to recruit to membranes different sets of downstream effectors directly responsible for vesicle formation, movement, tethering and fusion. The sequence is that of Ras-related protein Rab-3B (RAB3B) from Mesocricetus auratus (Golden hamster).